We begin with the raw amino-acid sequence, 205 residues long: Ribonuclease HII (205 aa).

Positions 22-205 (RFICGVDEAG…RKSFLKNILR (184 aa)) constitute an RNase H type-2 domain. A divalent metal cation contacts are provided by aspartate 28, glutamate 29, and aspartate 120.

It belongs to the RNase HII family. It depends on Mn(2+) as a cofactor. Mg(2+) is required as a cofactor.

The protein resides in the cytoplasm. The catalysed reaction is Endonucleolytic cleavage to 5'-phosphomonoester.. Its function is as follows. Endonuclease that specifically degrades the RNA of RNA-DNA hybrids. This Caldicellulosiruptor saccharolyticus (strain ATCC 43494 / DSM 8903 / Tp8T 6331) protein is Ribonuclease HII.